Reading from the N-terminus, the 498-residue chain is ADP,ATP carrier protein 1 (498 aa).

Topologically, residues 1-33 (MSTSKSENYLSELRKIIWPIEQYENKKFLPLAF) are cytoplasmic. Residues 34-54 (MMFCILLNYSTLRSIKDGFVV) form a helical membrane-spanning segment. Cysteine 37 and cysteine 85 are oxidised to a cystine. Residues 55–67 (TDIGTESISFLKT) lie on the Extracellular side of the membrane. A helical transmembrane segment spans residues 68 to 88 (YIVLPSAVIAMIIYVKLCDIL). The Cytoplasmic portion of the chain corresponds to 89 to 92 (KQEN). The helical transmembrane segment at 93–113 (VFYVITSFFLGYFALFAFVLY) threads the bilayer. Residues 114–147 (PYPDLVHPDHKTIESLSLAYPNFKWFIKIVGKWS) are Extracellular-facing. Residues 148–168 (FASFYTIAELWGTMMLSLLFW) form a helical membrane-spanning segment. Over 169–184 (QFANQITKIAEAKRFY) the chain is Cytoplasmic. Residues 185–205 (SMFGLLANLALPVTSVVIGYF) traverse the membrane as a helical segment. The Extracellular segment spans residues 206–218 (LHEKTQIVAEHLK). The chain crosses the membrane as a helical span at residues 219–239 (FVPLFVIMITSSFLIILTYRW). Residues 240–279 (MNKNVLTDPRLYDPALVKEKKTKAKLSFIESLKMIFTSKY) lie on the Cytoplasmic side of the membrane. The chain crosses the membrane as a helical span at residues 280 to 300 (VGYIALLIIAYGVSVNLVEGV). Topologically, residues 301-320 (WKSKVKELYPTKEAYTIYMG) are extracellular. A helical membrane pass occupies residues 321–341 (QFQFYQGWVAIAFMLIGSNIL). Residues 342–348 (RKVSWLT) lie on the Cytoplasmic side of the membrane. Residues 349–369 (AAMITPLMMFITGAAFFSFIF) traverse the membrane as a helical segment. Topologically, residues 370 to 379 (FDSVIAMNLT) are extracellular. Residues 380 to 400 (GILASSPLTLAVMIGMIQNVL) form a helical membrane-spanning segment. Topologically, residues 401-438 (SKGVKYSLFDATKNMAYIPLDKDLRVKGQAAVEVIGGR) are cytoplasmic. Position 436–442 (436–442 (GGRLGKS)) interacts with ATP. Residues 439–459 (LGKSGGAIIQSTFFILFPVFG) form a helical membrane-spanning segment. Residues 460–465 (FIEATP) lie on the Extracellular side of the membrane. A helical membrane pass occupies residues 466–486 (YFASIFFIIVILWIFAVKGLN). The Cytoplasmic segment spans residues 487–498 (KEYQVLVNKNEK).

This sequence belongs to the ADP/ATP translocase tlc family.

The protein resides in the cell membrane. Provides the rickettsial cell with host ATP in exchange for rickettsial ADP. This is an obligate exchange system. This energy acquiring activity is an important component of rickettsial parasitism. The chain is ADP,ATP carrier protein 1 (tlcA) from Rickettsia prowazekii (strain Madrid E).